The chain runs to 107 residues: Death-associated protein-like 1 (107 aa).

The disordered stretch occupies residues 1–23 (MANEVQDLLSPRKGGHPPAVKAG).

In terms of tissue distribution, expressed in hair follicle (at protein level).

Functionally, may play a role in the early stages of epithelial differentiation or in apoptosis. In Homo sapiens (Human), this protein is Death-associated protein-like 1 (DAPL1).